The sequence spans 464 residues: Cyclic 2,3-diphosphoglycerate synthetase (464 aa).

It belongs to the cyclic 2,3-diphosphoglycerate synthetase family.

The protein resides in the cytoplasm. It catalyses the reaction (2R)-2,3-bisphosphoglycerate + ATP + H(+) = cyclic (2R)-2,3-bisphosphoglycerate + ADP + phosphate. With respect to regulation, activity decreases in response to phosphate limitation. Functionally, catalyzes the formation of cyclic 2,3-diphosphoglycerate (cDPG) by formation of an intramolecular phosphoanhydride bond at the expense of ATP. Not able to catalyze cDPG hydrolysis. May be involved in osmotic balance. The polypeptide is Cyclic 2,3-diphosphoglycerate synthetase (cpgS) (Methanothermobacter thermautotrophicus (strain ATCC 29096 / DSM 1053 / JCM 10044 / NBRC 100330 / Delta H) (Methanobacterium thermoautotrophicum)).